Reading from the N-terminus, the 543-residue chain is Protein B602L (543 aa).

Repeat copies occupy residues 161-164, 165-168, 169-172, 173-176, 177-180, 181-184, 185-188, 189-192, 193-196, 197-200, 201-204, 205-208, and 209-212. Residues 161-212 form a 13 X 4 AA tandem repeats of [CN]-[ATV]-[DS]-T region; sequence CASTCASTCASTCASTCADTNVDTCTDTCASTCADTNVDTCASTCADTCAST.

Belongs to the asfivirus B602L family.

Its subcellular location is the host cytoplasm. Plays an essential role in the assembly of the icosahedral capsid of the virus. Allows the assembly of 3 molecules of hexon protein p72 and formation of a thermostable trimer. The polypeptide is Protein B602L (African swine fever virus (isolate Pig/Kenya/KEN-50/1950) (ASFV)).